The chain runs to 1023 residues: Vacuolar membrane protease (1023 aa).

The Cytoplasmic portion of the chain corresponds to 1–80 (MRAAGCGGTG…FFRSVFGYRK (80 aa)). Over residues 17 to 48 (KLSRSISQHQPKSMPQASVNSEQNPSVPNSPS) the composition is skewed to polar residues. The disordered stretch occupies residues 17–59 (KLSRSISQHQPKSMPQASVNSEQNPSVPNSPSAHKPARSQSAQ). Residues 81–101 (TSLTFLVALVFAATLLLSWAD) traverse the membrane as a helical segment. Over 102 to 425 (SSLDFSVDMP…VVFSVSQVVS (324 aa)) the chain is Vacuolar. 2 N-linked (GlcNAc...) asparagine glycosylation sites follow: N170 and N200. H214 and D226 together coordinate Zn(2+). The active-site Proton acceptor is the E259. The Zn(2+) site is built by E260, E285, and H357. Residues 426–446 (ANIALLVVVPVASLLLLFIIF) form a helical membrane-spanning segment. Over 447–461 (RCNKGWGFNFVNAIK) the chain is Cytoplasmic. A helical transmembrane segment spans residues 462 to 482 (YPLSLVASVLVLTFVSQVIIV). Residues 483-491 (PSNPFLVNS) are Vacuolar-facing. N490 carries N-linked (GlcNAc...) asparagine glycosylation. The chain crosses the membrane as a helical span at residues 492–512 (SIGLLVATLFSLFLLLNYIVL). The Cytoplasmic segment spans residues 513–529 (NGLNLVFKSFKGHQHDE). A helical transmembrane segment spans residues 530-550 (KLIVMCESSFLTWILLLWSTV). The Vacuolar portion of the chain corresponds to 551-564 (KLSHNKFGDDHTGE). A helical transmembrane segment spans residues 565 to 585 (LFIPILFSLQAVACFLGFLGW). Topologically, residues 586–643 (CFKPSKKVKVSREEHQPLLSSNGSNYGTQDDDDSLAPSSSLSLQSGFSENCEVHETKS) are cytoplasmic. Positions 604 to 613 (LSSNGSNYGT) are enriched in polar residues. The segment at 604 to 626 (LSSNGSNYGTQDDDDSLAPSSSL) is disordered. Residues 644–664 (FSYDWLVQFLVIVPISSLIIF) form a helical membrane-spanning segment. Residues 665–687 (NSGSLILNGLNKSIQESLSAQNL) lie on the Vacuolar side of the membrane. A glycan (N-linked (GlcNAc...) asparagine) is linked at N675. Residues 688–708 (IYKFIQIFVIVWSIPFLPFIF) traverse the membrane as a helical segment. The Cytoplasmic segment spans residues 709 to 712 (KLNR). Residues 713–733 (IIVLALSLVLLYGFFAVNITD) traverse the membrane as a helical segment. The Vacuolar segment spans residues 734–1023 (AFNDANPLKL…MVSVTKYIEV (290 aa)). Residues N815, N858, and N892 are each glycosylated (N-linked (GlcNAc...) asparagine).

The protein belongs to the peptidase M28 family. Zn(2+) is required as a cofactor.

The protein resides in the vacuole membrane. In terms of biological role, may be involved in vacuolar sorting and osmoregulation. This is Vacuolar membrane protease from Clavispora lusitaniae (strain ATCC 42720) (Yeast).